A 461-amino-acid polypeptide reads, in one-letter code: Dihydrolipoyl dehydrogenase (461 aa).

Residues 34–42 (EEDQAGGTC), lysine 51, and glycine 114 contribute to the FAD site. Cysteine 42 and cysteine 47 are joined by a disulfide. NAD(+) contacts are provided by residues 177-181 (GGGVI), glutamate 200, and 261-264 (AIGR). FAD-binding residues include aspartate 304 and alanine 312. Histidine 436 serves as the catalytic Proton acceptor.

Belongs to the class-I pyridine nucleotide-disulfide oxidoreductase family. The cofactor is FAD.

It localises to the cytoplasm. The enzyme catalyses N(6)-[(R)-dihydrolipoyl]-L-lysyl-[protein] + NAD(+) = N(6)-[(R)-lipoyl]-L-lysyl-[protein] + NADH + H(+). In terms of biological role, the branched-chain alpha-keto dehydrogenase complex catalyzes the overall conversion of alpha-keto acids to acyl-CoA and CO(2). It contains multiple copies of 3 enzymatic components: branched-chain alpha-keto acid decarboxylase (E1), lipoamide acyltransferase (E2) and lipoamide dehydrogenase (E3). This chain is Dihydrolipoyl dehydrogenase (lpdA), found in Chlamydia pneumoniae (Chlamydophila pneumoniae).